The sequence spans 124 residues: Nucleoid-associated protein Noca_0318 (124 aa).

Belongs to the YbaB/EbfC family. Homodimer.

It is found in the cytoplasm. Its subcellular location is the nucleoid. Functionally, binds to DNA and alters its conformation. May be involved in regulation of gene expression, nucleoid organization and DNA protection. The protein is Nucleoid-associated protein Noca_0318 of Nocardioides sp. (strain ATCC BAA-499 / JS614).